A 245-amino-acid polypeptide reads, in one-letter code: 1-acyl-sn-glycerol-3-phosphate acyltransferase (245 aa).

Positions 73–78 match the HXXXXD motif motif; it reads HQNNYD.

Belongs to the 1-acyl-sn-glycerol-3-phosphate acyltransferase family.

The protein localises to the cell inner membrane. It catalyses the reaction a 1-acyl-sn-glycero-3-phosphate + an acyl-CoA = a 1,2-diacyl-sn-glycero-3-phosphate + CoA. It participates in phospholipid metabolism; CDP-diacylglycerol biosynthesis; CDP-diacylglycerol from sn-glycerol 3-phosphate: step 2/3. Converts lysophosphatidic acid (LPA) into phosphatidic acid by incorporating an acyl moiety at the 2 position. This enzyme can utilize either acyl-CoA or acyl-acyl-carrier-protein as the fatty acyl donor. The chain is 1-acyl-sn-glycerol-3-phosphate acyltransferase (plsC) from Salmonella typhi.